The chain runs to 55 residues: AYKIEETCISCGACAAECPVNAIEQGDTIFVVNADTCIDCGNCANVCPVGAPVAE.

4Fe-4S ferredoxin-type domains follow at residues 2–27 (YKIEETCISCGACAAECPVNAIEQGD) and 28–55 (TIFVVNADTCIDCGNCANVCPVGAPVAE). 8 residues coordinate [4Fe-4S] cluster: Cys-8, Cys-11, Cys-14, Cys-18, Cys-37, Cys-40, Cys-43, and Cys-47.

The cofactor is [4Fe-4S] cluster.

Its function is as follows. Ferredoxins are iron-sulfur proteins that transfer electrons in a wide variety of metabolic reactions. In Rhodospirillum rubrum, this protein is Ferredoxin-1.